Reading from the N-terminus, the 338-residue chain is Ketol-acid reductoisomerase (NADP(+)) (338 aa).

A KARI N-terminal Rossmann domain is found at 1 to 181 (MQIFYDKDCD…GGGRTGIIET (181 aa)). Residues 24-27 (YGSQ), R47, S50, S52, and 82-85 (DEFQ) contribute to the NADP(+) site. H107 is an active-site residue. Residue G133 participates in NADP(+) binding. The KARI C-terminal knotted domain occupies 182 to 327 (SFREETETDL…SKLRAMMPWI (146 aa)). D190, E194, E226, and E230 together coordinate Mg(2+). S251 lines the substrate pocket.

This sequence belongs to the ketol-acid reductoisomerase family. Mg(2+) serves as cofactor.

The enzyme catalyses (2R)-2,3-dihydroxy-3-methylbutanoate + NADP(+) = (2S)-2-acetolactate + NADPH + H(+). It catalyses the reaction (2R,3R)-2,3-dihydroxy-3-methylpentanoate + NADP(+) = (S)-2-ethyl-2-hydroxy-3-oxobutanoate + NADPH + H(+). The protein operates within amino-acid biosynthesis; L-isoleucine biosynthesis; L-isoleucine from 2-oxobutanoate: step 2/4. It participates in amino-acid biosynthesis; L-valine biosynthesis; L-valine from pyruvate: step 2/4. In terms of biological role, involved in the biosynthesis of branched-chain amino acids (BCAA). Catalyzes an alkyl-migration followed by a ketol-acid reduction of (S)-2-acetolactate (S2AL) to yield (R)-2,3-dihydroxy-isovalerate. In the isomerase reaction, S2AL is rearranged via a Mg-dependent methyl migration to produce 3-hydroxy-3-methyl-2-ketobutyrate (HMKB). In the reductase reaction, this 2-ketoacid undergoes a metal-dependent reduction by NADPH to yield (R)-2,3-dihydroxy-isovalerate. In Acinetobacter baylyi (strain ATCC 33305 / BD413 / ADP1), this protein is Ketol-acid reductoisomerase (NADP(+)).